An 82-amino-acid chain; its full sequence is Cytochrome c-551 (82 aa).

Heme c-binding residues include Cys12, Cys15, His16, and Met61.

In terms of processing, binds 1 heme c group covalently per subunit.

This chain is Cytochrome c-551, found in Azotobacter vinelandii.